The following is a 314-amino-acid chain: Olfactory receptor 4K2 (314 aa).

The Extracellular segment spans residues 1 to 25; the sequence is MDVGNKSTMSEFVLLGLSNSWELQM. The N-linked (GlcNAc...) asparagine glycan is linked to Asn-5. The helical transmembrane segment at 26-49 threads the bilayer; sequence FFFMVFSLLYVATMVGNSLIVITV. The Cytoplasmic portion of the chain corresponds to 50-57; sequence IVDPHLHS. The helical transmembrane segment at 58-79 threads the bilayer; it reads PMYFLLTNLSIIDMSLASFATP. The Extracellular segment spans residues 80–100; the sequence is KMITDYLTGHKTISFDGCLTQ. An intrachain disulfide couples Cys-97 to Cys-189. The chain crosses the membrane as a helical span at residues 101 to 120; sequence IFFLHLFTGTEIILLMAMSF. Residues 121 to 139 are Cytoplasmic-facing; it reads DRYIAICKPLHYASVISPQ. A helical transmembrane segment spans residues 140 to 158; the sequence is VCVALVVASWIMGVMHSMS. At 159 to 195 the chain is on the extracellular side; it reads QVIFALTLPFCGPYEVDSFFCDLPVVFQLACVDTYVL. Residues 196–219 form a helical membrane-spanning segment; sequence GLFMISTSGIIALSCFIVLFNSYV. Topologically, residues 220-235 are cytoplasmic; it reads IVLVTVKHHSSRGSSK. The chain crosses the membrane as a helical span at residues 236 to 258; it reads ALSTCTAHFIVVFLFFGPCIFIY. Residues 259–269 lie on the Extracellular side of the membrane; that stretch reads MWPLSSFLTDK. The helical transmembrane segment at 270 to 289 threads the bilayer; it reads ILSVFYTIFTPTLNPIIYTL. Over 290 to 314 the chain is Cytoplasmic; that stretch reads RNQEVKIAMRKLKNRFLNFNKAMPS.

This sequence belongs to the G-protein coupled receptor 1 family.

The protein resides in the cell membrane. Functionally, odorant receptor. This is Olfactory receptor 4K2 (OR4K2) from Homo sapiens (Human).